Here is a 205-residue protein sequence, read N- to C-terminus: Urease accessory protein UreG (205 aa).

Residue 14 to 21 (GPVGSGKT) participates in GTP binding.

The protein belongs to the SIMIBI class G3E GTPase family. UreG subfamily. Homodimer. UreD, UreF and UreG form a complex that acts as a GTP-hydrolysis-dependent molecular chaperone, activating the urease apoprotein by helping to assemble the nickel containing metallocenter of UreC. The UreE protein probably delivers the nickel.

It is found in the cytoplasm. Its function is as follows. Facilitates the functional incorporation of the urease nickel metallocenter. This process requires GTP hydrolysis, probably effectuated by UreG. In Escherichia coli, this protein is Urease accessory protein UreG.